Consider the following 157-residue polypeptide: Large ribosomal subunit protein uL11 (157 aa).

2 disordered regions span residues 1–28 and 138–157; these read MAGT…GPTP and NNPR…DILK. Residues 139–157 are compositionally biased toward basic and acidic residues; it reads NPREFKSRMEDGEYDDILK.

Belongs to the universal ribosomal protein uL11 family. In terms of assembly, part of the ribosomal stalk of the 50S ribosomal subunit. Interacts with L10 and the large rRNA to form the base of the stalk. L10 forms an elongated spine to which L12 dimers bind in a sequential fashion forming a multimeric L10(L12)X complex.

In terms of biological role, forms part of the ribosomal stalk which helps the ribosome interact with GTP-bound translation factors. The protein is Large ribosomal subunit protein uL11 of Haloquadratum walsbyi (strain DSM 16790 / HBSQ001).